Consider the following 234-residue polypeptide: Adenosine 5'-phosphosulfate reductase (234 aa).

4 residues coordinate [4Fe-4S] cluster: Cys-120, Cys-121, Cys-203, and Cys-206. The active-site Nucleophile; cysteine thiosulfonate intermediate is Cys-229.

The protein belongs to the PAPS reductase family. CysH subfamily. Requires [4Fe-4S] cluster as cofactor.

The protein localises to the cytoplasm. The catalysed reaction is [thioredoxin]-disulfide + sulfite + AMP + 2 H(+) = adenosine 5'-phosphosulfate + [thioredoxin]-dithiol. Its pathway is sulfur metabolism; hydrogen sulfide biosynthesis; sulfite from sulfate. Catalyzes the formation of sulfite from adenosine 5'-phosphosulfate (APS) using thioredoxin as an electron donor. The polypeptide is Adenosine 5'-phosphosulfate reductase (Bacillus cereus (strain AH820)).